Here is a 185-residue protein sequence, read N- to C-terminus: uncharacterized protein (185 aa).

Transmembrane regions (helical) follow at residues 1–21 and 111–131; these read MMKF…LTPE and FLWI…AFAW.

To A.aeolicus aq_1900.

Its subcellular location is the cell membrane. This is an uncharacterized protein from Aquifex aeolicus (strain VF5).